A 103-amino-acid polypeptide reads, in one-letter code: MYAVFQSGGKQHRVAEGHTVRLEKLEVATGDTVEFDQVLLVADGETVHVGAPLVAGGKVVAEVVSHGRAEKVTIVKFRRRKHHDKKMGHRQWFTEVKITAINA.

The protein belongs to the bacterial ribosomal protein bL21 family. In terms of assembly, part of the 50S ribosomal subunit. Contacts protein L20.

Functionally, this protein binds to 23S rRNA in the presence of protein L20. The sequence is that of Large ribosomal subunit protein bL21 from Shewanella sediminis (strain HAW-EB3).